Reading from the N-terminus, the 129-residue chain is Small ribosomal subunit protein uS11 (129 aa).

This sequence belongs to the universal ribosomal protein uS11 family. Part of the 30S ribosomal subunit. Interacts with proteins S7 and S18. Binds to IF-3.

In terms of biological role, located on the platform of the 30S subunit, it bridges several disparate RNA helices of the 16S rRNA. Forms part of the Shine-Dalgarno cleft in the 70S ribosome. In Hydrogenovibrio crunogenus (strain DSM 25203 / XCL-2) (Thiomicrospira crunogena), this protein is Small ribosomal subunit protein uS11.